A 109-amino-acid polypeptide reads, in one-letter code: Thiosulfate sulfurtransferase GlpE (109 aa).

Positions 17–105 (HQQTAVLVDI…WHRHFPAEVA (89 aa)) constitute a Rhodanese domain. The active-site Cysteine persulfide intermediate is cysteine 65.

This sequence belongs to the GlpE family.

It localises to the cytoplasm. The enzyme catalyses thiosulfate + hydrogen cyanide = thiocyanate + sulfite + 2 H(+). It catalyses the reaction thiosulfate + [thioredoxin]-dithiol = [thioredoxin]-disulfide + hydrogen sulfide + sulfite + 2 H(+). Functionally, transferase that catalyzes the transfer of sulfur from thiosulfate to thiophilic acceptors such as cyanide or dithiols. May function in a CysM-independent thiosulfate assimilation pathway by catalyzing the conversion of thiosulfate to sulfite, which can then be used for L-cysteine biosynthesis. The sequence is that of Thiosulfate sulfurtransferase GlpE from Klebsiella pneumoniae subsp. pneumoniae (strain ATCC 700721 / MGH 78578).